The following is a 257-amino-acid chain: Large ribosomal subunit protein uL2 (257 aa).

The tract at residues V207 to A231 is disordered.

The protein belongs to the universal ribosomal protein uL2 family. As to quaternary structure, component of the large ribosomal subunit.

The protein resides in the cytoplasm. In terms of biological role, component of the large ribosomal subunit. The ribosome is a large ribonucleoprotein complex responsible for the synthesis of proteins in the cell. This chain is Large ribosomal subunit protein uL2 (rpl8), found in Xenopus laevis (African clawed frog).